The chain runs to 593 residues: Zinc metalloproteinase-disintegrin-like kaouthiagin-like (593 aa).

The first 20 residues, 1 to 20, serve as a signal peptide directing secretion; it reads MIQALLVIICLAVFPHQGSS. Positions 21 to 196 are excised as a propeptide; that stretch reads IILESGNVND…KTSQFTNTPE (176 aa). The Peptidase M12B domain occupies 205-400; that stretch reads KYIEFYVIVD…DRPQCILNKP (196 aa). Residues glutamate 208 and aspartate 292 each contribute to the Ca(2+) site. Intrachain disulfides connect cysteine 316/cysteine 395, cysteine 356/cysteine 379, and cysteine 358/cysteine 363. Asparagine 319 is a glycosylation site (N-linked (GlcNAc...) asparagine). Zn(2+) contacts are provided by histidine 341, histidine 345, and histidine 351. Residues cysteine 395, asparagine 398, isoleucine 410, asparagine 413, phenylalanine 415, glutamate 417, glutamate 420, and aspartate 423 each contribute to the Ca(2+) site. Positions 408 to 477 constitute a Disintegrin domain; the sequence is PPICGNYFVE…ECPTDSLQRN (70 aa). Cystine bridges form between cysteine 411-cysteine 440, cysteine 422-cysteine 435, cysteine 424-cysteine 430, cysteine 434-cysteine 462, cysteine 449-cysteine 469, cysteine 456-cysteine 488, cysteine 481-cysteine 493, cysteine 500-cysteine 550, cysteine 515-cysteine 558, cysteine 528-cysteine 538, cysteine 545-cysteine 581, and cysteine 575-cysteine 586. A D/ECD-tripeptide motif is present at residues 455–457; sequence DCD. Residues aspartate 457, leucine 458, glutamate 460, aspartate 472, and serine 473 each contribute to the Ca(2+) site. N-linked (GlcNAc...) asparagine glycosylation is present at asparagine 490.

The protein belongs to the venom metalloproteinase (M12B) family. P-III subfamily. P-IIIa sub-subfamily. In terms of assembly, monomer. Zn(2+) is required as a cofactor. Expressed by the venom gland.

It localises to the secreted. Snake venom zinc metalloproteinase that cleaves the membrane-bound precursor of TNF-alpha (TNF) into its mature soluble form showing the same digestion pattern than ADAM17. In Naja atra (Chinese cobra), this protein is Zinc metalloproteinase-disintegrin-like kaouthiagin-like.